A 126-amino-acid chain; its full sequence is Large ribosomal subunit protein bL20c (126 aa).

It belongs to the bacterial ribosomal protein bL20 family.

The protein localises to the plastid. It is found in the chloroplast. Functionally, binds directly to 23S ribosomal RNA and is necessary for the in vitro assembly process of the 50S ribosomal subunit. It is not involved in the protein synthesizing functions of that subunit. This Pelargonium hortorum (Common geranium) protein is Large ribosomal subunit protein bL20c.